Consider the following 227-residue polypeptide: Translation initiation factor 6 (227 aa).

Belongs to the eIF-6 family.

Its function is as follows. Binds to the 50S ribosomal subunit and prevents its association with the 30S ribosomal subunit to form the 70S initiation complex. This is Translation initiation factor 6 from Methanococcus vannielii (strain ATCC 35089 / DSM 1224 / JCM 13029 / OCM 148 / SB).